We begin with the raw amino-acid sequence, 339 residues long: Cathepsin B (339 aa).

Positions 1-17 (MWWLWASLCCLLALGDA) are cleaved as a signal peptide. The propeptide at 18-79 (RSRPSFHPLS…QRVMFTEDLK (62 aa)) is activation peptide. Disulfide bonds link Cys-93–Cys-122, Cys-105–Cys-150, Cys-141–Cys-207, Cys-142–Cys-146, Cys-179–Cys-211, and Cys-187–Cys-198. Residue Cys-108 is part of the active site. A glycan (N-linked (GlcNAc...) asparagine) is linked at Asn-192. Lys-220 carries the N6-acetyllysine modification. Residues His-278 and Asn-298 contribute to the active site. Positions 334–339 (QYWEKI) are excised as a propeptide.

It belongs to the peptidase C1 family. In terms of assembly, dimer of a heavy chain and a light chain cross-linked by a disulfide bond. Interacts with SRPX2. Directly interacts with SHKBP1.

The protein localises to the lysosome. It localises to the melanosome. The protein resides in the secreted. It is found in the extracellular space. Its subcellular location is the apical cell membrane. It carries out the reaction Hydrolysis of proteins with broad specificity for peptide bonds. Preferentially cleaves -Arg-Arg-|-Xaa bonds in small molecule substrates (thus differing from cathepsin L). In addition to being an endopeptidase, shows peptidyl-dipeptidase activity, liberating C-terminal dipeptides.. Thiol protease which is believed to participate in intracellular degradation and turnover of proteins. Cleaves matrix extracellular phosphoglycoprotein MEPE. Involved in the solubilization of cross-linked TG/thyroglobulin in the thyroid follicle lumen. Has also been implicated in tumor invasion and metastasis. The polypeptide is Cathepsin B (CTSB) (Macaca fascicularis (Crab-eating macaque)).